The chain runs to 239 residues: mRNA turnover protein 4 homolog (239 aa).

Residues 216 to 239 (QQMDDDLPESAPESEGESEEEDDS) are disordered. The span at 218 to 239 (MDDDLPESAPESEGESEEEDDS) shows a compositional bias: acidic residues. S225, S229, and S233 each carry phosphoserine.

It belongs to the universal ribosomal protein uL10 family. In terms of assembly, associates with the pre-60S ribosomal particle. Interacts with MINAS-60 (product of an alternative open reading frame of RBM10).

It is found in the nucleus. The protein localises to the nucleolus. The protein resides in the cytoplasm. Functionally, component of the ribosome assembly machinery. Nuclear paralog of the ribosomal protein P0, it binds pre-60S subunits at an early stage of assembly in the nucleolus, and is replaced by P0 in cytoplasmic pre-60S subunits and mature 80S ribosomes. This Mus musculus (Mouse) protein is mRNA turnover protein 4 homolog (Mrto4).